Consider the following 437-residue polypeptide: GTPase Der (437 aa).

EngA-type G domains follow at residues 4–167 (PVVA…AEKD) and 175–352 (IRFS…DHQH). Residues 10-17 (GRPNVGKS), 57-61 (DTGGI), 119-122 (NKVD), 181-188 (GRPNVGKS), 229-233 (DTAGI), and 294-297 (NKWD) contribute to the GTP site. Residues 353–437 (RRIQSAVLND…PIRLIKRRRK (85 aa)) enclose the KH-like domain.

This sequence belongs to the TRAFAC class TrmE-Era-EngA-EngB-Septin-like GTPase superfamily. EngA (Der) GTPase family. Associates with the 50S ribosomal subunit.

Functionally, GTPase that plays an essential role in the late steps of ribosome biogenesis. This Limosilactobacillus fermentum (strain NBRC 3956 / LMG 18251) (Lactobacillus fermentum) protein is GTPase Der.